The sequence spans 1339 residues: Receptor tyrosine-protein kinase erbB-3 (1339 aa).

The signal sequence occupies residues 1–19; it reads MRATGTLQVLCFLLSLARG. At 20–643 the chain is on the extracellular side; it reads SEMGNSQAVC…EVLMSKPHLV (624 aa). The N-linked (GlcNAc...) asparagine glycan is linked to Asn-126. 11 disulfide bridges follow: Cys-186–Cys-194, Cys-190–Cys-202, Cys-210–Cys-218, Cys-214–Cys-226, Cys-227–Cys-235, Cys-231–Cys-243, Cys-246–Cys-255, Cys-259–Cys-286, Cys-290–Cys-301, Cys-305–Cys-320, and Cys-323–Cys-327. An N-linked (GlcNAc...) asparagine glycan is attached at Asn-250. N-linked (GlcNAc...) asparagine glycans are attached at residues Asn-353, Asn-408, Asn-414, Asn-437, and Asn-469. 10 disulfides stabilise this stretch: Cys-500–Cys-509, Cys-504–Cys-517, Cys-520–Cys-529, Cys-533–Cys-549, Cys-552–Cys-565, Cys-556–Cys-573, Cys-576–Cys-585, Cys-589–Cys-610, Cys-613–Cys-621, and Cys-617–Cys-629. Asn-522 carries an N-linked (GlcNAc...) asparagine glycan. An N-linked (GlcNAc...) asparagine glycan is attached at Asn-566. The N-linked (GlcNAc...) asparagine glycan is linked to Asn-616. A helical transmembrane segment spans residues 644 to 662; sequence IAVTVGLAVILMILGGSFL. Over 663–1339 the chain is Cytoplasmic; that stretch reads YWRGRRIQNK…LFPKANAQRT (677 aa). Ser-684 is subject to Phosphoserine. Residues 707–964 enclose the Protein kinase domain; sequence LRKLKVLGSG…TFKELANEFT (258 aa). Residues 713-721, Lys-740, 786-788, and 832-837 contribute to the ATP site; these read LGSGVFGTV, QYL, and DLALRN. Residue Asp-832 is the Proton acceptor of the active site. Ser-980 carries the phosphoserine modification. The segment covering 1023-1036 has biased composition (low complexity); that stretch reads SLGSALSLPTGTLT. 2 disordered regions span residues 1023–1052 and 1078–1215; these read SLGS…SGYM and PISL…GSLE. Residues 1039 to 1052 show a composition bias toward polar residues; it reads RGSQSLLSPSSGYM. Residues 1172–1184 are compositionally biased toward low complexity; that stretch reads GTLSSVGLSSVLG. Positions 1185–1195 are enriched in acidic residues; that stretch reads TEEEDEDEEYE.

The protein belongs to the protein kinase superfamily. Tyr protein kinase family. EGF receptor subfamily. Monomer and homodimer. Heterodimer with each of the other ERBB receptors (Potential). Interacts with CSPG5, PA2G4, GRB7, MYOC and MUC1. Found in a ternary complex with NRG1 and ITGAV:ITGB3 or ITGA6:ITGB4. Post-translationally, autophosphorylated. Ligand-binding increases phosphorylation on tyrosine residues and promotes its association with the p85 subunit of phosphatidylinositol 3-kinase.

It is found in the membrane. It catalyses the reaction L-tyrosyl-[protein] + ATP = O-phospho-L-tyrosyl-[protein] + ADP + H(+). In terms of biological role, tyrosine-protein kinase that plays an essential role as cell surface receptor for neuregulins. Binds to neuregulin-1 (NRG1) and is activated by it; ligand-binding increases phosphorylation on tyrosine residues and promotes its association with the p85 subunit of phosphatidylinositol 3-kinase. May also be activated by CSPG5. Involved in the regulation of myeloid cell differentiation. The sequence is that of Receptor tyrosine-protein kinase erbB-3 (Erbb3) from Rattus norvegicus (Rat).